Here is a 483-residue protein sequence, read N- to C-terminus: Bromoperoxidase-catalase (483 aa).

The disordered stretch occupies residues 1 to 24; it reads MTQGPLTTEAGAPVADNQNSETAG. Catalysis depends on residues His-54 and Asn-127. Heme is bound at residue Tyr-337.

Belongs to the catalase family.

The enzyme catalyses 2 H2O2 = O2 + 2 H2O. This is Bromoperoxidase-catalase (bca) from Streptomyces venezuelae (strain ATCC 10712 / CBS 650.69 / DSM 40230 / JCM 4526 / NBRC 13096 / PD 04745).